A 204-amino-acid chain; its full sequence is Holliday junction branch migration complex subunit RuvA (204 aa).

Residues 1-64 are domain I; it reads MIGKLKGTID…EDQLKLFGFM (64 aa). Positions 65-143 are domain II; sequence TALEREWFNL…AFAGEAINIA (79 aa). The flexible linker stretch occupies residues 144–151; sequence LKQELGEG. Positions 152 to 204 are domain III; sequence VAAAPVADAVSALTNLGYSRDQAANAVAAAMKTAGDDADSAKLIRLGLKELAR.

The protein belongs to the RuvA family. Homotetramer. Forms an RuvA(8)-RuvB(12)-Holliday junction (HJ) complex. HJ DNA is sandwiched between 2 RuvA tetramers; dsDNA enters through RuvA and exits via RuvB. An RuvB hexamer assembles on each DNA strand where it exits the tetramer. Each RuvB hexamer is contacted by two RuvA subunits (via domain III) on 2 adjacent RuvB subunits; this complex drives branch migration. In the full resolvosome a probable DNA-RuvA(4)-RuvB(12)-RuvC(2) complex forms which resolves the HJ.

The protein resides in the cytoplasm. In terms of biological role, the RuvA-RuvB-RuvC complex processes Holliday junction (HJ) DNA during genetic recombination and DNA repair, while the RuvA-RuvB complex plays an important role in the rescue of blocked DNA replication forks via replication fork reversal (RFR). RuvA specifically binds to HJ cruciform DNA, conferring on it an open structure. The RuvB hexamer acts as an ATP-dependent pump, pulling dsDNA into and through the RuvAB complex. HJ branch migration allows RuvC to scan DNA until it finds its consensus sequence, where it cleaves and resolves the cruciform DNA. The chain is Holliday junction branch migration complex subunit RuvA from Rhizobium leguminosarum bv. trifolii (strain WSM2304).